The sequence spans 137 residues: BolA-like protein 1 (137 aa).

Serine 81 carries the post-translational modification Phosphoserine. A disordered region spans residues 114–137 (WGENSQLDTSPPCLGGNKKTLGTP).

This sequence belongs to the BolA/IbaG family. In terms of assembly, interacts with GLRX5.

The protein resides in the mitochondrion. Its function is as follows. Acts as a mitochondrial iron-sulfur (Fe-S) cluster assembly factor that facilitates (Fe-S) cluster insertion into a subset of mitochondrial proteins. Probably acts together with the monothiol glutaredoxin GLRX5. May protect cells against oxidative stress. In Pongo abelii (Sumatran orangutan), this protein is BolA-like protein 1 (BOLA1).